The chain runs to 805 residues: RFX-like transcription factor daf-19 (805 aa).

The span at 1-14 (MTNEEPVPSTSSVL) shows a compositional bias: polar residues. The segment at 1–113 (MTNEEPVPST…TPRKKMEPED (113 aa)) is disordered. Basic and acidic residues predominate over residues 19-92 (KNVKIETPSR…DSKSLSKETH (74 aa)). Residues 93 to 104 (NTISTRSSSSGT) show a composition bias toward polar residues. The segment at residues 260 to 334 (TVNWLFENYE…YHYYGIRLKD (75 aa)) is a DNA-binding region (RFX-type winged-helix).

Belongs to the RFX family. In terms of tissue distribution, ciliated sensory neurons. As to expression, expressed in the male tail HOB and RnB neurons but not in male-specific CEM head neurons or other ciliated neurons.

It localises to the nucleus. In terms of biological role, probable transcription factor. May regulate some genes of ciliated sensory neurons. May activate the expression of the shared components of sensory cilia, but not the cell-type-specific expression. Together with transcription factor atf-7, involved in regulation of the serotonergic response of ADF neurons to pathogenic food. Its function is as follows. Involved in male mating behavior; may play a role in functional specialization of PKD ciliated sensory neurons. This chain is RFX-like transcription factor daf-19, found in Caenorhabditis elegans.